We begin with the raw amino-acid sequence, 1406 residues long: Protein crumbs homolog 1 (1406 aa).

Positions 1–25 (MALKNINYLLIFYLSFSLLIYIKNS) are cleaved as a signal peptide. Topologically, residues 26 to 1347 (FCNKNNTRCL…DDLISDIFTT (1322 aa)) are extracellular. N-linked (GlcNAc...) asparagine glycosylation is found at asparagine 30, asparagine 41, and asparagine 42. 3 consecutive EGF-like domains span residues 30-68 (NNTR…KDCD), 70-108 (MKDP…TICE), and 110-146 (TIGS…RFCE). Cystine bridges form between cysteine 34–cysteine 45, cysteine 39–cysteine 54, cysteine 56–cysteine 67, cysteine 74–cysteine 85, cysteine 79–cysteine 96, cysteine 98–cysteine 107, cysteine 114–cysteine 125, cysteine 119–cysteine 134, cysteine 136–cysteine 145, cysteine 152–cysteine 163, cysteine 157–cysteine 172, cysteine 174–cysteine 183, cysteine 190–cysteine 201, cysteine 195–cysteine 210, cysteine 212–cysteine 221, cysteine 228–cysteine 239, cysteine 233–cysteine 248, cysteine 250–cysteine 259, cysteine 266–cysteine 277, and cysteine 271–cysteine 286. The region spanning 148–184 (DHDECASSPCQNGAVCQDGIDGYSCFCVPGYQGRHCD) is the EGF-like 4; calcium-binding domain. The region spanning 186-222 (EVDECASDPCKNEATCLNEIGRYTCICPHNYSGVNCE) is the EGF-like 5; calcium-binding domain. The N-linked (GlcNAc...) asparagine glycan is linked to asparagine 215. Residues 224–260 (EIDECWSQPCLNGATCQDALGAYFCDCAPGFLGDHCE) enclose the EGF-like 6; calcium-binding domain. The EGF-like 7; calcium-binding domain maps to 262–299 (NTDECASQPCLHGGLCVDGENRYSCNCTGSGFTGTHCE). Asparagine 287 is a glycosylation site (N-linked (GlcNAc...) asparagine). 13 disulfides stabilise this stretch: cysteine 288/cysteine 298, cysteine 305/cysteine 316, cysteine 310/cysteine 325, cysteine 327/cysteine 336, cysteine 343/cysteine 354, cysteine 348/cysteine 383, cysteine 385/cysteine 394, cysteine 401/cysteine 412, cysteine 406/cysteine 421, cysteine 423/cysteine 438, cysteine 445/cysteine 456, cysteine 450/cysteine 469, and cysteine 471/cysteine 480. 2 EGF-like domains span residues 301–337 (LMPL…AQCE) and 339–395 (DLNE…IHCE). N-linked (GlcNAc...) asparagine glycans are attached at residues asparagine 313 and asparagine 322. One can recognise an EGF-like 10; calcium-binding domain in the interval 397-439 (DVNECSSNPCQNGGTCENLPGNYTCHCPFDNLSRTFYGGRDCS). Residues asparagine 418, asparagine 427, and asparagine 453 are each glycosylated (N-linked (GlcNAc...) asparagine). Residues 441–481 (ILLGCTHQQCLNNGTCIPHFQDGQHGFSCLCPSGYTGSLCE) form the EGF-like 11 domain. Residues 485-670 (TLSFEGDGFL…GSSLNVKAGC (186 aa)) enclose the Laminin G-like 1 domain. 3 N-linked (GlcNAc...) asparagine glycosylation sites follow: asparagine 550, asparagine 561, and asparagine 657. Disulfide bonds link cysteine 642-cysteine 670, cysteine 676-cysteine 687, cysteine 681-cysteine 696, and cysteine 698-cysteine 707. Residues 672–708 (RKDWCESQPCQSRGRCINLWLSYQCDCHRPYEGPNCL) enclose the EGF-like 12 domain. One can recognise a Laminin G-like 2 domain in the interval 714 to 885 (GRFGQDDSTG…PVLVNVTQGC (172 aa)). Residues asparagine 757, asparagine 871, and asparagine 880 are each glycosylated (N-linked (GlcNAc...) asparagine). 6 disulfide bridges follow: cysteine 851–cysteine 885, cysteine 891–cysteine 902, cysteine 896–cysteine 911, cysteine 913–cysteine 922, cysteine 928–cysteine 939, and cysteine 933–cysteine 948. EGF-like domains follow at residues 887 to 923 (GDNS…KACE) and 924 to 960 (EVQW…QSGQ). The region spanning 950–1137 (ANAVFNGQSG…ISTNSVVTGC (188 aa)) is the Laminin G-like 3 domain. 3 N-linked (GlcNAc...) asparagine glycosylation sites follow: asparagine 968, asparagine 975, and asparagine 1000. 16 disulfide bridges follow: cysteine 1096–cysteine 1137, cysteine 1143–cysteine 1154, cysteine 1148–cysteine 1163, cysteine 1165–cysteine 1174, cysteine 1181–cysteine 1191, cysteine 1186–cysteine 1200, cysteine 1202–cysteine 1211, cysteine 1218–cysteine 1229, cysteine 1223–cysteine 1238, cysteine 1240–cysteine 1249, cysteine 1259–cysteine 1274, cysteine 1268–cysteine 1283, cysteine 1285–cysteine 1294, cysteine 1301–cysteine 1312, cysteine 1306–cysteine 1321, and cysteine 1323–cysteine 1332. Positions 1139–1175 (QLNVCNSNPCLHGGNCEDIYSSYHCSCPLGWSGKHCE) constitute an EGF-like 15 domain. The 36-residue stretch at 1177 to 1212 (NIDECFSNPCIHGNCSDRVAAYHCTCEPGYTGVNCE) folds into the EGF-like 16; calcium-binding domain. Asparagine 1190 is a glycosylation site (N-linked (GlcNAc...) asparagine). EGF-like domains lie at 1214-1250 (DIDN…KFCR) and 1255-1295 (PSTV…EWCE). N-linked (GlcNAc...) asparagine glycans are attached at residues asparagine 1243, asparagine 1265, and asparagine 1273. The region spanning 1297-1333 (DIDECASDPCVNGGLCQDLLNKFQCLCDVAFAGERCE) is the EGF-like 19; calcium-binding domain. A helical transmembrane segment spans residues 1348-1368 (IGSVTVALLLILLLAIVASVV). Topologically, residues 1369 to 1406 (TSNKRATQGTYSPSRQEKEGSRVEMWNLMPPPAMERLI) are cytoplasmic. The segment at 1370 to 1406 (SNKRATQGTYSPSRQEKEGSRVEMWNLMPPPAMERLI) is interaction with EPB41L5.

The protein belongs to the Crumbs protein family. Component of a complex composed of PALS1, CRB1 and EPB41L5. Within the complex, interacts (via intracellular domain) with PALS1 and EPB41L5 (via FERM domain). Forms a complex with MPP4 and PALS1. Interacts with MPDZ/MUPP1 and MPP4. In terms of processing, extensively glycosylated. As to expression, preferential expression in retina, also expressed in brain, testis, fetal brain and fetal eye. Expressed at the outer limiting membrane and apical to adherens junctions in the retina.

The protein resides in the apical cell membrane. Its subcellular location is the secreted. It is found in the cell projection. It localises to the cilium. The protein localises to the photoreceptor outer segment. The protein resides in the photoreceptor inner segment. Functionally, plays a role in photoreceptor morphogenesis in the retina. May maintain cell polarization and adhesion. This is Protein crumbs homolog 1 from Homo sapiens (Human).